The primary structure comprises 61 residues: Phospholipase A2 (61 aa).

Positions 27, 29, and 31 each coordinate Ca(2+). C28 and C35 form a disulfide bridge. H38 is an active-site residue. D39 contacts Ca(2+). A disulfide bridge connects residues C41 and C59. D60 is a catalytic residue.

Belongs to the phospholipase A2 family. Group II subfamily. D49 sub-subfamily. Homodimer. Requires Ca(2+) as cofactor. In terms of tissue distribution, expressed by the venom gland.

The protein localises to the secreted. It catalyses the reaction a 1,2-diacyl-sn-glycero-3-phosphocholine + H2O = a 1-acyl-sn-glycero-3-phosphocholine + a fatty acid + H(+). In terms of biological role, snake venom phospholipase A2 (PLA2) that displays edema-inducing activities. PLA2 catalyzes the calcium-dependent hydrolysis of the 2-acyl groups in 3-sn-phosphoglycerides. This chain is Phospholipase A2, found in Crotalus atrox (Western diamondback rattlesnake).